The following is a 2505-amino-acid chain: Fatty acid synthase (2505 aa).

Met-1 carries the post-translational modification N-acetylmethionine. Positions 1-406 (MEEVVIAGMS…GANVHVILQP (406 aa)) constitute a Ketosynthase family 3 (KS3) domain. Position 59 is an N6-acetyllysine (Lys-59). Ser-63 bears the Phosphoserine mark. Residue Lys-70 is modified to N6-acetyllysine. Cys-161 serves as the catalytic For beta-ketoacyl synthase activity. The residue at position 207 (Ser-207) is a Phosphoserine. The For beta-ketoacyl synthase activity role is filled by His-293. At Lys-298 the chain carries N6-acetyllysine. His-331 functions as the For beta-ketoacyl synthase activity in the catalytic mechanism. The segment at 429–817 (RTMEAVQGLL…IDINPNALFP (389 aa)) is acyl and malonyl transferases. Lys-528 is modified (N6-acetyllysine). The active-site For malonyltransferase activity is Ser-581. An acyl-CoA-binding positions include 647 to 648 (DT) and Phe-671. Lys-673 carries the N6-acetyllysine modification. A Phosphoserine modification is found at Ser-725. An an acyl-CoA-binding site is contributed by Arg-773. The residue at position 790 (Lys-790) is an N6-acetyllysine. The tract at residues 844-966 (IPVAEDFPNG…KVYQWEDPDS (123 aa)) is N-terminal hotdog fold. Positions 844 to 1112 (IPVAEDFPNG…TSRRQQEQLV (269 aa)) constitute a PKS/mFAS DH domain. The active-site Proton acceptor; for dehydratase activity is the His-878. The interval 983–1112 (VSRLTQGEVY…TSRRQQEQLV (130 aa)) is C-terminal hotdog fold. N6-acetyllysine is present on Lys-993. Asp-1032 (proton donor; for dehydratase activity) is an active-site residue. Lys-1276 is modified (N6-acetyllysine). Residue Cys-1464 is modified to S-nitrosocysteine. A phosphoserine mark is found at Ser-1578 and Ser-1588. The tract at residues 1629–1857 (DVPSSWTLEE…VQVREEEPEA (229 aa)) is enoyl reductase. 1665–1682 (VLIHSGSGGVGQAAISIA) serves as a coordination point for NADP(+). Lys-1698 is subject to N6-(pyridoxal phosphate)lysine; alternate. Lys-1698 carries the N6-acetyllysine; alternate modification. 3 positions are modified to N6-acetyllysine: Lys-1765, Lys-1841, and Lys-1989. 1765 to 1780 (KFDLSNNHPLGMAIFL) lines the NADP(+) pocket. Positions 1858 to 2113 (MLPGAQPTLI…VLAEKKAVAH (256 aa)) are beta-ketoacyl reductase. Cys-2085 carries the post-translational modification S-nitrosocysteine. Residues 2113-2193 (HGDGEAQRDL…EMSSKAGSDT (81 aa)) form the Carrier domain. The residue at position 2151 (Ser-2151) is an O-(pantetheine 4'-phosphoryl)serine; alternate. Ser-2151 carries the phosphoserine; alternate modification. 2 positions are modified to phosphoserine: Ser-2191 and Ser-2230. The tract at residues 2202–2505 (NDTSLKQAQL…AEPRVSVREG (304 aa)) is thioesterase. Ser-2302 functions as the For thioesterase activity in the catalytic mechanism. Lys-2385 is subject to N6-acetyllysine. Lys-2443 is covalently cross-linked (Glycyl lysine isopeptide (Lys-Gly) (interchain with G-Cter in SUMO2)). His-2475 (for thioesterase activity) is an active-site residue.

In terms of assembly, homodimer which is arranged in a head to tail fashion. Interacts with CEACAM1; this interaction is insulin and phosphorylation-dependent; reduces fatty-acid synthase activity. In terms of processing, S-nitrosylation of Fatty acid synthase at cysteine residues Cys-1464 or Cys-2085 is important for the enzyme dimerization. In adipocytes, S-nitrosylation of Fatty acid synthase occurs under physiological conditions and gradually increases during adipogenesis.

It is found in the cytoplasm. The protein resides in the melanosome. It catalyses the reaction acetyl-CoA + n malonyl-CoA + 2n NADPH + 2n H(+) = a long-chain fatty acid + (n+1) CoA + n CO2 + 2n NADP(+).. The enzyme catalyses holo-[ACP] + acetyl-CoA = acetyl-[ACP] + CoA. The catalysed reaction is holo-[ACP] + malonyl-CoA = malonyl-[ACP] + CoA. It carries out the reaction a fatty acyl-[ACP] + malonyl-[ACP] + H(+) = a 3-oxoacyl-[ACP] + holo-[ACP] + CO2. It catalyses the reaction a (3R)-hydroxyacyl-[ACP] + NADP(+) = a 3-oxoacyl-[ACP] + NADPH + H(+). The enzyme catalyses a (3R)-hydroxyacyl-[ACP] = a (2E)-enoyl-[ACP] + H2O. The catalysed reaction is a 2,3-saturated acyl-[ACP] + NADP(+) = a (2E)-enoyl-[ACP] + NADPH + H(+). It carries out the reaction hexadecanoyl-[ACP] + H2O = hexadecanoate + holo-[ACP] + H(+). It catalyses the reaction acetyl-[ACP] + malonyl-[ACP] + H(+) = 3-oxobutanoyl-[ACP] + holo-[ACP] + CO2. The enzyme catalyses 3-oxobutanoyl-[ACP] + NADPH + H(+) = (3R)-hydroxybutanoyl-[ACP] + NADP(+). The catalysed reaction is (3R)-hydroxybutanoyl-[ACP] = (2E)-butenoyl-[ACP] + H2O. It carries out the reaction (2E)-butenoyl-[ACP] + NADPH + H(+) = butanoyl-[ACP] + NADP(+). It catalyses the reaction butanoyl-[ACP] + malonyl-[ACP] + H(+) = 3-oxohexanoyl-[ACP] + holo-[ACP] + CO2. The enzyme catalyses 3-oxohexanoyl-[ACP] + NADPH + H(+) = (3R)-hydroxyhexanoyl-[ACP] + NADP(+). The catalysed reaction is (3R)-hydroxyhexanoyl-[ACP] = (2E)-hexenoyl-[ACP] + H2O. It carries out the reaction (2E)-hexenoyl-[ACP] + NADPH + H(+) = hexanoyl-[ACP] + NADP(+). It catalyses the reaction hexanoyl-[ACP] + malonyl-[ACP] + H(+) = 3-oxooctanoyl-[ACP] + holo-[ACP] + CO2. The enzyme catalyses 3-oxooctanoyl-[ACP] + NADPH + H(+) = (3R)-hydroxyoctanoyl-[ACP] + NADP(+). The catalysed reaction is (3R)-hydroxyoctanoyl-[ACP] = (2E)-octenoyl-[ACP] + H2O. It carries out the reaction (2E)-octenoyl-[ACP] + NADPH + H(+) = octanoyl-[ACP] + NADP(+). It catalyses the reaction octanoyl-[ACP] + malonyl-[ACP] + H(+) = 3-oxodecanoyl-[ACP] + holo-[ACP] + CO2. The enzyme catalyses 3-oxodecanoyl-[ACP] + NADPH + H(+) = (3R)-hydroxydecanoyl-[ACP] + NADP(+). The catalysed reaction is (3R)-hydroxydecanoyl-[ACP] = (2E)-decenoyl-[ACP] + H2O. It carries out the reaction (2E)-decenoyl-[ACP] + NADPH + H(+) = decanoyl-[ACP] + NADP(+). It catalyses the reaction decanoyl-[ACP] + malonyl-[ACP] + H(+) = 3-oxododecanoyl-[ACP] + holo-[ACP] + CO2. The enzyme catalyses 3-oxododecanoyl-[ACP] + NADPH + H(+) = (3R)-hydroxydodecanoyl-[ACP] + NADP(+). The catalysed reaction is (3R)-hydroxydodecanoyl-[ACP] = (2E)-dodecenoyl-[ACP] + H2O. It carries out the reaction (2E)-dodecenoyl-[ACP] + NADPH + H(+) = dodecanoyl-[ACP] + NADP(+). It catalyses the reaction dodecanoyl-[ACP] + malonyl-[ACP] + H(+) = 3-oxotetradecanoyl-[ACP] + holo-[ACP] + CO2. The enzyme catalyses 3-oxotetradecanoyl-[ACP] + NADPH + H(+) = (3R)-hydroxytetradecanoyl-[ACP] + NADP(+). The catalysed reaction is (3R)-hydroxytetradecanoyl-[ACP] = (2E)-tetradecenoyl-[ACP] + H2O. It carries out the reaction (2E)-tetradecenoyl-[ACP] + NADPH + H(+) = tetradecanoyl-[ACP] + NADP(+). It catalyses the reaction tetradecanoyl-[ACP] + malonyl-[ACP] + H(+) = 3-oxohexadecanoyl-[ACP] + holo-[ACP] + CO2. The enzyme catalyses 3-oxohexadecanoyl-[ACP] + NADPH + H(+) = (3R)-hydroxyhexadecanoyl-[ACP] + NADP(+). The catalysed reaction is (3R)-hydroxyhexadecanoyl-[ACP] = (2E)-hexadecenoyl-[ACP] + H2O. It carries out the reaction (2E)-hexadecenoyl-[ACP] + NADPH + H(+) = hexadecanoyl-[ACP] + NADP(+). It catalyses the reaction hexadecanoyl-[ACP] + malonyl-[ACP] + H(+) = 3-oxooctadecanoyl-[ACP] + holo-[ACP] + CO2. The enzyme catalyses 3-oxooctadecanoyl-[ACP] + NADPH + H(+) = (3R)-hydroxyoctadecanoyl-[ACP] + NADP(+). The catalysed reaction is (3R)-hydroxyoctadecanoyl-[ACP] = (2E)-octadecenoyl-[ACP] + H2O. It carries out the reaction (2E)-octadecenoyl-[ACP] + NADPH + H(+) = octadecanoyl-[ACP] + NADP(+). It catalyses the reaction tetradecanoyl-[ACP] + H2O = tetradecanoate + holo-[ACP] + H(+). The enzyme catalyses octadecanoyl-[ACP] + H2O = octadecanoate + holo-[ACP] + H(+). It functions in the pathway lipid metabolism; fatty acid biosynthesis. Its activity is regulated as follows. Cerulenin, a potent non-competitive pharmacological inhibitor of FAS, binds covalently to the active site of the condensing enzyme region, inactivating a key enzyme step in fatty acid synthesis. Another inhibitor, though less efficient, is C75, a member of the alpha-methylene-gamma-butyrolactone chemical class, also proposed as an antitumour and anti-obesity agent. Fatty acid synthetase is a multifunctional enzyme that catalyzes the de novo biosynthesis of long-chain saturated fatty acids starting from acetyl-CoA and malonyl-CoA in the presence of NADPH. This multifunctional protein contains 7 catalytic activities and a site for the binding of the prosthetic group 4'-phosphopantetheine of the acyl carrier protein ([ACP]) domain. In Rattus norvegicus (Rat), this protein is Fatty acid synthase (Fasn).